A 529-amino-acid polypeptide reads, in one-letter code: MLMLLVRGTHYESLRSKVVLPTPLGGRSTEALVSECPIPDTGIRWRQSDEALRVNVGGVRRLLSARALARFPGTRLGRLQAAASEEQARRLCDDYDAAAHEFYFDRHPGFFLGLLHFYRTGHLHVLDELCVFAFGQEADYWGLGENALAACCRARYLERRLTQPRAWDEDSDTPSSVDPCPDEISDVQRELARYGAARCGRLRRRLWLTMENPGYSLPSKLFSCVSISVVLASIAAMCIHSLPEYQAREAAAAVAAVAAGRSPEGVRDDPVLRRLEYFCIAWFSFEVSSRLLLAPSTRNFFCHPLNLIDIVSVLPFYLTLLAGVALGDQGGTGGKELGHLGKVVQVFRLMRIFRVLKLARHSTGLRSLGATLKHSYREVGILLLYLAVGVSVFSGVAYTAEKEEDVGFNTIPACWWWGTVSMTTVGYGDVVPVTVAGKLAASGCILGGILVVALPITIIFNKFSHFYRRQKALEAAVRNSNHQEFEDLLSSVDAVSEASLETSRETSQEGRSADLETQAPSEPPHPQMY.

Topologically, residues 1–217 (MLMLLVRGTH…LTMENPGYSL (217 aa)) are cytoplasmic. A helical transmembrane segment spans residues 218–239 (PSKLFSCVSISVVLASIAAMCI). Topologically, residues 240-270 (HSLPEYQAREAAAAVAAVAAGRSPEGVRDDP) are extracellular. Residues 271–293 (VLRRLEYFCIAWFSFEVSSRLLL) form a helical membrane-spanning segment. Topologically, residues 294-304 (APSTRNFFCHP) are cytoplasmic. The helical transmembrane segment at 305–322 (LNLIDIVSVLPFYLTLLA) threads the bilayer. The Extracellular portion of the chain corresponds to 323–340 (GVALGDQGGTGGKELGHL). Residues 341-361 (GKVVQVFRLMRIFRVLKLARH) traverse the membrane as a helical; Voltage-sensor segment. Topologically, residues 362–376 (STGLRSLGATLKHSY) are cytoplasmic. Residues 377–398 (REVGILLLYLAVGVSVFSGVAY) traverse the membrane as a helical segment. The Extracellular portion of the chain corresponds to 399-411 (TAEKEEDVGFNTI). The helical intramembrane region spans 412-423 (PACWWWGTVSMT). The Selectivity filter signature appears at 424–429 (TVGYGD). An intramembrane segment occupies 424–431 (TVGYGDVV). Residues 432–438 (PVTVAGK) lie on the Extracellular side of the membrane. The helical transmembrane segment at 439–467 (LAASGCILGGILVVALPITIIFNKFSHFY) threads the bilayer. Residues 468-529 (RRQKALEAAV…PSEPPHPQMY (62 aa)) are Cytoplasmic-facing. Residues 496-529 (SEASLETSRETSQEGRSADLETQAPSEPPHPQMY) form a disordered region. Basic and acidic residues predominate over residues 502–514 (TSRETSQEGRSAD).

This sequence belongs to the potassium channel family. S (TC 1.A.1.2) subfamily. Kv9.1/KCNS1 sub-subfamily. As to quaternary structure, heterotetramer with KCNB1. Heterotetramer with KCNB2. Does not form homomultimers.

The protein resides in the cell membrane. Its function is as follows. Potassium channel regulatory subunit that modulate the delayed rectifier voltage-gated potassium channel activity of KCNB1 and KCNB2 by altering their kinetics, expression levels, and shifting the half-inactivation potential to more polarized values. While it does not form functional channels on its own, it can form functional heterotetrameric channels with KCNB1 and KCNB2. Each regulatory subunit has unique regulatory properties that can lead to extensive inhibition, significant changes in kinetics, and/or substantial shifts in the voltage dependencies of the inactivation process. This is Delayed-rectifier potassium channel regulatory subunit KCNS1 from Papio anubis (Olive baboon).